The chain runs to 155 residues: Small ribosomal subunit protein uS7 (155 aa).

The protein belongs to the universal ribosomal protein uS7 family. As to quaternary structure, part of the 30S ribosomal subunit. Contacts proteins S9 and S11.

Functionally, one of the primary rRNA binding proteins, it binds directly to 16S rRNA where it nucleates assembly of the head domain of the 30S subunit. Is located at the subunit interface close to the decoding center, probably blocks exit of the E-site tRNA. In Thermosipho melanesiensis (strain DSM 12029 / CIP 104789 / BI429), this protein is Small ribosomal subunit protein uS7.